The primary structure comprises 310 residues: MSENRIRIATRKSPLAMWQAEFVKAELERIHPGIVVELLPMSTKGDVILDTPLAKVGGKGLFVKELEVAILEDQADIAVHSMKDVPVDFPEGLGLEVICEREDPRDAFVSNIYKTISELPLGATVGTSSLRRQCQLRASRPDLIIKDLRGNVGTRLAKLDNGEYDAIILAAAGLIRLKLSGRIASFISAEQSLPANGQGAVGIECRTNDERVKALLAPLEHLETRYRVIAERAMNTRLEGGCQVPIGAFAEINGDEMTLRGLVGNPDGSEIIEGIITGPKTEATQLGVALAEELLSKGAKSILDAVYAKA.

Residue Cys242 is modified to S-(dipyrrolylmethanemethyl)cysteine.

The protein belongs to the HMBS family. In terms of assembly, monomer. Dipyrromethane is required as a cofactor.

It carries out the reaction 4 porphobilinogen + H2O = hydroxymethylbilane + 4 NH4(+). Its pathway is porphyrin-containing compound metabolism; protoporphyrin-IX biosynthesis; coproporphyrinogen-III from 5-aminolevulinate: step 2/4. Functionally, tetrapolymerization of the monopyrrole PBG into the hydroxymethylbilane pre-uroporphyrinogen in several discrete steps. The chain is Porphobilinogen deaminase from Shewanella sp. (strain W3-18-1).